The sequence spans 596 residues: Nuclear receptor subfamily 2 group C member 2 (596 aa).

A Phosphoserine; by MAPK modification is found at S19. S46 is subject to Phosphoserine. Residues S55 and S68 each carry the phosphoserine; by MAPK modification. Phosphoserine is present on S98. The nuclear receptor DNA-binding region spans 114–189; sequence VEYCVVCGDK…MGMKMESVQS (76 aa). 2 NR C4-type zinc fingers span residues 117-137 and 153-177; these read CVVCGDKASGRHYGAVSCEGC and CRSNQDCIINKHHRNRCQFCRLKKC. A Glycyl lysine isopeptide (Lys-Gly) (interchain with G-Cter in SUMO2) cross-link involves residue K192. S219 is modified (phosphoserine). Position 231 is an N6-acetyllysine (K231). The 243-residue stretch at 341 to 583 folds into the NR LBD domain; it reads GSIHVISRDQ…SIIPYILKME (243 aa).

Belongs to the nuclear hormone receptor family. NR2 subfamily. In terms of assembly, homodimer; can bind DNA as homodimer. Heterodimer; binds DNA as a heterodimer with NR2C1 required for chromatin remodeling and for binding to promoter regions such as globin DR1 repeats. Interacts with PCAF; the interaction preferentially occurs on the non-phosphorylated form and induces NR2C2-mediated transactivation activity and does not require the ligand-binding domain. Interacts (MAPK-mediated phosphorylated form) with NRIP1; the interaction promotes repression of NR2C2-mediated activity. Interacts with NR2C2AP; the interaction represses selective NR2C2-mediated transcriptional activity. Interacts with NLRP10. Interacts (via ligand-binding region) with transcriptional corepressor JAZF1; the interaction promotes NR2C2-mediated transcriptional repression. Post-translationally, phosphorylation on Ser-19 and Ser-68 is an important regulator of NR2C2-mediated transcriptional activity. Phosphorylation on these residues recruits the corepressor, NRIP1, leading to transcripional repression, whereas the non-phosphorylated form preferentially recruits the coactivator, PCAF.

The protein resides in the nucleus. Functionally, orphan nuclear receptor that can act as a repressor or activator of transcription. An important repressor of nuclear receptor signaling pathways such as retinoic acid receptor, retinoid X, vitamin D3 receptor, thyroid hormone receptor and estrogen receptor pathways. May regulate gene expression during the late phase of spermatogenesis. Together with NR2C1, forms the core of the DRED (direct repeat erythroid-definitive) complex that represses embryonic and fetal globin transcription including that of GATA1. Binds to hormone response elements (HREs) consisting of two 5'-AGGTCA-3' half site direct repeat consensus sequences. Plays a fundamental role in early embryonic development and embryonic stem cells. Required for normal spermatogenesis and cerebellum development. Appears to be important for neurodevelopmentally regulated behavior. Activates transcriptional activity of LHCG. Antagonist of PPARA-mediated transactivation. The chain is Nuclear receptor subfamily 2 group C member 2 (NR2C2) from Homo sapiens (Human).